Reading from the N-terminus, the 436-residue chain is Histidine--tRNA ligase (436 aa).

This sequence belongs to the class-II aminoacyl-tRNA synthetase family. In terms of assembly, homodimer.

The protein localises to the cytoplasm. The catalysed reaction is tRNA(His) + L-histidine + ATP = L-histidyl-tRNA(His) + AMP + diphosphate + H(+). This is Histidine--tRNA ligase from Prochlorococcus marinus (strain MIT 9313).